A 619-amino-acid chain; its full sequence is Mitogen-activated protein kinase kinase kinase 2 (619 aa).

Residues 25-45 (LSLQETRKAKSSSPKKQNDVR) form a disordered region. Serine 26 is modified (phosphoserine). Residues 43–122 (DVRVKFEHRG…KSLKILLVIN (80 aa)) form the PB1 domain. Phosphoserine is present on residues serine 153, serine 159, and serine 164. Disordered stretches follow at residues 154 to 173 (IIGPTSRDRSSPPPGYIPDE), 201 to 248 (LDPL…QEFS), and 289 to 355 (RTQG…APTN). The span at 203 to 219 (PLSLSSPENSGSGSCPS) shows a compositional bias: low complexity. Phosphoserine occurs at positions 239, 297, 311, 331, 344, and 349. Residues 290–299 (TQGTSLRSPV) are compositionally biased toward polar residues. The span at 300 to 315 (SFSPTDHSLSTSSGSS) shows a compositional bias: low complexity. Over residues 322-332 (DDSRIRRRGSD) the composition is skewed to basic and acidic residues. Residues 357 to 617 (RLGKLLGQGA…DELLRHMFVH (261 aa)) enclose the Protein kinase domain. ATP is bound by residues 362–371 (LGQGAFGRVY) and lysine 385. Catalysis depends on aspartate 483, which acts as the Proton acceptor.

Belongs to the protein kinase superfamily. STE Ser/Thr protein kinase family. MAP kinase kinase kinase subfamily. In terms of assembly, interacts with PKN2; the interaction activates PKN2 kinase activity in a MAP3K2-independent kinase activity. Self-associates. Binds both upstream activators and downstream substrates in multimolecular complexes. Interacts (via the kinase catalytic domain) with STK38. Interacts with XIAP/BIRC4. The cofactor is Mg(2+). Autophosphorylated. In terms of processing, ubiquitination by XIAP/BIRC4 does not lead to proteasomal degradation.

Its subcellular location is the cytoplasm. It is found in the nucleus. The enzyme catalyses L-seryl-[protein] + ATP = O-phospho-L-seryl-[protein] + ADP + H(+). The catalysed reaction is L-threonyl-[protein] + ATP = O-phospho-L-threonyl-[protein] + ADP + H(+). Its activity is regulated as follows. Activated by phosphorylation on Thr-524. In terms of biological role, component of a protein kinase signal transduction cascade. Regulates the JNK and ERK5 pathways by phosphorylating and activating MAP2K5 and MAP2K7. Plays a role in caveolae kiss-and-run dynamics. This chain is Mitogen-activated protein kinase kinase kinase 2 (MAP3K2), found in Homo sapiens (Human).